The primary structure comprises 655 residues: p-hydroxybenzoic acid efflux pump subunit AaeB (655 aa).

At 1–12 (MGIFSIANQHIR) the chain is on the periplasmic side. Residues 13–33 (FAVKLACAIVLALFIGFHFQL) form a helical membrane-spanning segment. Residues 34–37 (ETPR) are Cytoplasmic-facing. A helical membrane pass occupies residues 38 to 58 (WAVLTAAIVAAGPAFAAGGEP). Topologically, residues 59–68 (YSGAIRYRGM) are periplasmic. The chain crosses the membrane as a helical span at residues 69-89 (LRIIGTFIGCIAALIIIISMI). The Cytoplasmic portion of the chain corresponds to 90–92 (RAP). The chain crosses the membrane as a helical span at residues 93-113 (LLMILVCCVWVGFCTWISSLV). Over 114-120 (RIENSYA) the chain is Periplasmic. Residues 121–141 (WGLSGYTALIIVITIQTEPLL) form a helical membrane-spanning segment. Over 142–151 (TPQFALERCS) the chain is Cytoplasmic. A helical membrane pass occupies residues 152-172 (EIVIGIGCAILADLLFSPRSI). Residues 173 to 369 (KQEVDRELDS…RTTLSCILGT (197 aa)) are Periplasmic-facing. Residues 370–390 (LFWLWTGWTSGNGEMVMIAVV) traverse the membrane as a helical segment. The Cytoplasmic segment spans residues 391–406 (TSLAMRLPNPRMVCID). Residues 407 to 427 (FIYGTLAALPLGLLYFLVIIP) traverse the membrane as a helical segment. The Periplasmic segment spans residues 428–430 (NTQ). A helical membrane pass occupies residues 431 to 451 (QSMLLLCLSLAVLGFFIGIEV). At 452-458 (QKRRLGS) the chain is on the cytoplasmic side. The helical transmembrane segment at 459–479 (MGALASTINIIVLDNPMTFHF) threads the bilayer. Over 480 to 481 (SQ) the chain is Periplasmic. A helical transmembrane segment spans residues 482 to 502 (FLDSALGQIVGCMLAFIVILL). The Cytoplasmic segment spans residues 503 to 655 (VRDKSKDRTG…HKYQNALTDS (153 aa)).

The protein belongs to the aromatic acid exporter ArAE (TC 2.A.85) family.

It localises to the cell inner membrane. Its function is as follows. Forms an efflux pump with AaeA. Could function as a metabolic relief valve, allowing to eliminate certain compounds when they accumulate to high levels in the cell. This Salmonella paratyphi A (strain ATCC 9150 / SARB42) protein is p-hydroxybenzoic acid efflux pump subunit AaeB.